A 315-amino-acid polypeptide reads, in one-letter code: DNA-directed RNA polymerase subunit alpha (315 aa).

The segment at 1–228 (MIEMEKPKVE…EHLNLFITLK (228 aa)) is alpha N-terminal domain (alpha-NTD). Positions 245 to 315 (KEKVLEMTIE…LGLGLRPSDE (71 aa)) are alpha C-terminal domain (alpha-CTD).

Belongs to the RNA polymerase alpha chain family. In terms of assembly, homodimer. The RNAP catalytic core consists of 2 alpha, 1 beta, 1 beta' and 1 omega subunit. When a sigma factor is associated with the core the holoenzyme is formed, which can initiate transcription.

The enzyme catalyses RNA(n) + a ribonucleoside 5'-triphosphate = RNA(n+1) + diphosphate. Its function is as follows. DNA-dependent RNA polymerase catalyzes the transcription of DNA into RNA using the four ribonucleoside triphosphates as substrates. This Alkaliphilus metalliredigens (strain QYMF) protein is DNA-directed RNA polymerase subunit alpha.